Consider the following 527-residue polypeptide: GMP synthase [glutamine-hydrolyzing] (527 aa).

Residues Lys-4–Asp-202 form the Glutamine amidotransferase type-1 domain. Cys-81 functions as the Nucleophile in the catalytic mechanism. Catalysis depends on residues His-176 and Glu-178. The GMPS ATP-PPase domain occupies Trp-203 to Arg-395. Ser-230–Ser-236 lines the ATP pocket.

As to quaternary structure, homodimer.

It carries out the reaction XMP + L-glutamine + ATP + H2O = GMP + L-glutamate + AMP + diphosphate + 2 H(+). Its pathway is purine metabolism; GMP biosynthesis; GMP from XMP (L-Gln route): step 1/1. Its function is as follows. Catalyzes the synthesis of GMP from XMP. This chain is GMP synthase [glutamine-hydrolyzing], found in Paraburkholderia phytofirmans (strain DSM 17436 / LMG 22146 / PsJN) (Burkholderia phytofirmans).